A 397-amino-acid chain; its full sequence is Argininosuccinate synthase (397 aa).

8–16 contacts ATP; that stretch reads AYSGGLDTS. 2 residues coordinate L-citrulline: tyrosine 86 and serine 91. Glycine 116 serves as a coordination point for ATP. L-aspartate-binding residues include threonine 118, asparagine 122, and aspartate 123. Asparagine 122 lines the L-citrulline pocket. L-citrulline-binding residues include arginine 126, serine 175, serine 184, glutamate 260, and tyrosine 272.

Belongs to the argininosuccinate synthase family. Type 1 subfamily. In terms of assembly, homotetramer.

It is found in the cytoplasm. The catalysed reaction is L-citrulline + L-aspartate + ATP = 2-(N(omega)-L-arginino)succinate + AMP + diphosphate + H(+). It participates in amino-acid biosynthesis; L-arginine biosynthesis; L-arginine from L-ornithine and carbamoyl phosphate: step 2/3. The protein is Argininosuccinate synthase of Clostridium botulinum (strain ATCC 19397 / Type A).